We begin with the raw amino-acid sequence, 302 residues long: Deoxyhypusine hydroxylase (302 aa).

M1 is modified (N-acetylmethionine). HEAT-like PBS-type repeat units lie at residues 54–80 (LKHELAYCLGQMRDPRAIPVLVSVLQD), 87–113 (VRHEAGEALGAIGNPKVLGLLKQYSTD), 175–201 (ERYRAMFALRNVGGKEAALALAEGLKC), 206–232 (FRHEVGYVLGQLQHEAAVSELAATLAR), and 239–265 (VRHECAEALGAIARPACLAALREYITD). Fe cation is bound by residues H56, H89, and E90. Fe cation is bound by residues H208, H241, and E242.

It belongs to the deoxyhypusine hydroxylase family. The cofactor is Fe(2+).

The catalysed reaction is [eIF5A protein]-deoxyhypusine + AH2 + O2 = [eIF5A protein]-hypusine + A + H2O. The protein operates within protein modification; eIF5A hypusination. Catalyzes the hydroxylation of the N(6)-(4-aminobutyl)-L-lysine intermediate produced by deoxyhypusine synthase/DHPS on a critical lysine of the eukaryotic translation initiation factor 5A/eIF-5A. This is the second step of the post-translational modification of that lysine into an unusual amino acid residue named hypusine. Hypusination is unique to mature eIF-5A factor and is essential for its function. This chain is Deoxyhypusine hydroxylase (Dohh), found in Rattus norvegicus (Rat).